We begin with the raw amino-acid sequence, 549 residues long: Cation/acetate symporter ActP (549 aa).

Topologically, residues 1-32 are periplasmic; it reads MKRVLTALAATLPFAANAADAISGAVERQPTN. The chain crosses the membrane as a helical span at residues 33 to 55; it reads WQAIIMFLIFVVFTLGITYWASK. Topologically, residues 56–75 are cytoplasmic; that stretch reads RVRSRSDYYTAGGNITGFQN. Residues 76–98 traverse the membrane as a helical segment; the sequence is GLAIAGDYMSAASFLGISALVFT. Residues 99–102 lie on the Periplasmic side of the membrane; sequence SGYD. The chain crosses the membrane as a helical span at residues 103 to 125; it reads GLIYSLGFLVGWPIILFLIAERL. At 126-145 the chain is on the cytoplasmic side; sequence RNLGRYTSADVASYRLKQGP. Residues 146 to 168 form a helical membrane-spanning segment; it reads IRILSACGSLVVVALYLIAQMVG. At 169–182 the chain is on the periplasmic side; it reads AGKLIELLFGLNYH. Residues 183 to 205 form a helical membrane-spanning segment; sequence IAVVLVGVLMMMYVLFGGMLATT. Over 206-211 the chain is Cytoplasmic; that stretch reads WVQIIK. The chain crosses the membrane as a helical span at residues 212–234; sequence AVLLLFGASFMAFMVMKHVGFSF. Residues 235-260 lie on the Periplasmic side of the membrane; that stretch reads NNLFSEAMAVHPKGVDIMKPGGLVKD. The chain crosses the membrane as a helical span at residues 261–283; sequence PISALSLGLGLMFGTAGLPHILM. Topologically, residues 284 to 302 are cytoplasmic; the sequence is RFFTVSDAREARKSVFYAT. A helical membrane pass occupies residues 303–325; that stretch reads GFMGYFYILTFIIGFGAIMLVGA. The Periplasmic segment spans residues 326-349; it reads NPEYKDAAGHLIGGNNMAAVHLAN. The helical transmembrane segment at 350 to 372 threads the bilayer; sequence AVGGNLFLGFISAVAFATILAVV. Residues 373–401 lie on the Cytoplasmic side of the membrane; the sequence is ADLTLAGASAVSHDLYANVFKKGATEREE. Residues 402 to 424 form a helical membrane-spanning segment; it reads LRVSKITVLILGVIAIILGVLFE. Over 425–427 the chain is Periplasmic; that stretch reads NQN. Residues 428–450 traverse the membrane as a helical segment; sequence IAFMVGLAFAIAASCNFPIILLS. The Cytoplasmic portion of the chain corresponds to 451–461; it reads MYWSKLTTRGA. A helical membrane pass occupies residues 462 to 484; it reads MLGGWLGLITAVVLMILGPTIWV. Residues 485–493 lie on the Periplasmic side of the membrane; sequence QILGHEKAI. Residues 494-516 traverse the membrane as a helical segment; it reads FPYEYPALFSISVAFLGIWFFSA. The Cytoplasmic segment spans residues 517–549; that stretch reads TDNSAEGARERELFRAQFIRSQTGFGVEQGRAH.

The protein belongs to the sodium:solute symporter (SSF) (TC 2.A.21) family.

It is found in the cell inner membrane. Transports acetate. This chain is Cation/acetate symporter ActP (actP), found in Shigella flexneri.